Reading from the N-terminus, the 1702-residue chain is MLNKKFKLNFIALTVAYALTPYTEAALVRDDVDYQIFRDFAENKGRFSVGATNVEVRDKNNHSLGNVLPNGIPMIDFSVVDVDKRIATLINPQYVVGVKHVSNGVSELHFGNLNGNMNNGNDKSHRDVSSEENRYFSVEKNEYPTKLNGKAVTTEDQTQKRREDYYMPRLDKFVTEVAPIEASTASSDAGTYNDQNKYPAFVRLGSGSQFIYKKGDNYSLILNNHEVGGNNLKLVGDAYTYGIAGTPYKVNHENNGLIGFGNSKEEHSDPKGILSQDPLTNYAVLGDSGSPLFVYDREKGKWLFLGSYDFWAGYNKKSWQEWNIYKPEFAKTVLDKDTAGSLTGSNTQYNWNPTGKTSVISNGSESLNVDLFDSSQDTDSKKNNHGKSVTLRGSGTLTLNNNIDQGAGGLFFEGDYEVKGTSDSTTWKGAGVSVADGKTVTWKVHNPKSDRLAKIGKGTLIVEGKGENKGSLKVGDGTVILKQQADANNKVKAFSQVGIVSGRSTVVLNDDKQVDPNSIYFGFRGGRLDANGNNLTFEHIRNIDDGARLVNHNTSKTSTVTITGESLITDPNTITPYNIDAPDEDNPYAFRRIKDGGQLYLNLENYTYYALRKGASTRSELPKNSGESNENWLYMGKTSDEAKRNVMNHINNERMNGFNGYFGEEEGKNNGNLNVTFKGKSEQNRFLLTGGTNLNGDLKVEKGTLFLSGRPTPHARDIAGISSTKKDQHFAENNEVVVEDDWINRNFKATNINVTNNATLYSGRNVANITSNITASDNAKVHIGYKAGDTVCVRSDYTGYVTCTTDKLSDKALNSFNATNVSGNVNLSGNANFVLGKANLFGTISGTGNSQVRLTENSHWHLTGDSNVNQLNLDKGHIHLNAQNDANKVTTYNTLTVNSLSGNGSFYYLTDLSNKQGDKVVVTKSATGNFTLQVADKTGEPTKNELTLFDASNATRNNLNVSLVGNTVDLGAWKYKLRNVNGRYDLYNPEVEKRNQTVDTTNITTPNNIQADVPSVPSNNEEIARVETPVPPPAPATPSETTETVAENSKQESKTVEKNEQDATETTAQNGEVAEEAKPSVKANTQTNEVAQSGSETEETQTTEIKETAKVEKEEKAKVEKEEKAKVEKDEIQEAPQMASETSPKQAKPAPKEVSTDTKVEETQVQAQPQTQSTTVAAAEATSPNSKPAEETQPSEKTNAEPVTPVVSKNQTENTTDQPTEREKTAKVETEKTQEPPQVASQASPKQEQSETVQPQAVLESENVPTVNNAEEVQAQLQTQTSATVSTKQPAPENSINTGSATAITETAEKSDKPQTETAASTEDASQHKANTVADNSVANNSESSEPKSRRRRSISQPQETSAEETTAASTDETTIADNSKRSKPNRRSRRSVRSEPTVTNGSDRSTVALRDLTSTNTNAVISDAMAKAQFVALNVGKAVSQHISQLEMNNEGQYNVWVSNTSMNENYSSSQYRRFSSKSTQTQLGWDQTISNNVQLGGVFTYVRNSNNFDKASSKNTLAQVNFYSKYYADNHWYLGIDLGYGKFQSNLKTNHNAKFARHTAQFGLTAGKAFNLGNFGITPIVGVRYSYLSNANFALAKDRIKVNPISVKTAFAQVDLSYTYHLGEFSVTPILSARYDTNQGSGKINVNQYDFAYNVENQQQYNAGLKLKYHNVKLSLIGGLTKAKQAEKQKTAELKLSFSF.

Residues 1-25 (MLNKKFKLNFIALTVAYALTPYTEA) form the signal peptide. A Peptidase S6 domain is found at 26 to 332 (ALVRDDVDYQ…NIYKPEFAKT (307 aa)). Residue Ser288 is part of the active site. Positions 991 to 1411 (VEKRNQTVDT…GSDRSTVALR (421 aa)) are disordered. Polar residues predominate over residues 997-1021 (TVDTTNITTPNNIQADVPSVPSNNE). Positions 1037-1047 (TPSETTETVAE) are enriched in low complexity. Residues 1049 to 1061 (SKQESKTVEKNEQ) show a composition bias toward basic and acidic residues. Residues 1082–1095 (KANTQTNEVAQSGS) are compositionally biased toward polar residues. Basic and acidic residues-rich tracts occupy residues 1104–1132 (EIKE…KDEI) and 1150–1162 (APKE…KVEE). 2 consecutive repeat copies span residues 1109-1116 (AKVEKEEK) and 1117-1124 (AKVEKEEK). A 2 X 8 AA tandem repeats of A-K-V-E-K-E-E-K region spans residues 1109–1124 (AKVEKEEKAKVEKEEK). Composition is skewed to polar residues over residues 1163–1186 (TQVQ…SPNS) and 1207–1218 (VSKNQTENTTDQ). Residues 1219-1234 (PTEREKTAKVETEKTQ) show a composition bias toward basic and acidic residues. Composition is skewed to polar residues over residues 1235–1255 (EPPQ…TVQP), 1263–1305 (NVPT…TAIT), and 1316–1341 (TETA…VANN). Positions 1360–1378 (ETSAEETTAASTDETTIAD) are enriched in low complexity. The span at 1382 to 1392 (RSKPNRRSRRS) shows a compositional bias: basic residues. The 253-residue stretch at 1450–1702 (NNEGQYNVWV…TAELKLSFSF (253 aa)) folds into the Autotransporter domain.

It is found in the periplasm. Its subcellular location is the secreted. It localises to the cell surface. The protein localises to the cell outer membrane. The enzyme catalyses Cleavage of immunoglobulin A molecules at certain Pro-|-Xaa bonds in the hinge region. No small molecule substrates are known.. Its function is as follows. Virulence factor; cleaves host immunoglobulin A producing intact Fc and Fab fragments. This Haemophilus influenzae protein is Immunoglobulin A1 protease autotransporter (iga).